We begin with the raw amino-acid sequence, 177 residues long: B-phycoerythrin beta chain (177 aa).

Phycourobilin-binding residues include Cys-50 and Cys-61. Asn-72 carries the post-translational modification N4-methylasparagine. 2 residues coordinate (2R,3E)-phycoerythrobilin: Cys-82 and Cys-158.

The protein belongs to the phycobiliprotein family. Heteromer of 6 alpha, 6 beta and one gamma chain. Contains two covalently linked phycoerythrobilin chromophores and one covalently linked phycourobilin chromophore.

The protein resides in the plastid. It localises to the chloroplast thylakoid membrane. In terms of biological role, light-harvesting photosynthetic bile pigment-protein from the phycobiliprotein complex. The protein is B-phycoerythrin beta chain (cpeB) of Porphyridium purpureum (Red alga).